A 195-amino-acid polypeptide reads, in one-letter code: Large ribosomal subunit protein uL18 (195 aa).

The protein belongs to the universal ribosomal protein uL18 family. In terms of assembly, part of the 50S ribosomal subunit. Contacts the 5S and 23S rRNAs.

In terms of biological role, this is one of the proteins that bind and probably mediate the attachment of the 5S RNA into the large ribosomal subunit, where it forms part of the central protuberance. In Metallosphaera sedula (strain ATCC 51363 / DSM 5348 / JCM 9185 / NBRC 15509 / TH2), this protein is Large ribosomal subunit protein uL18.